Reading from the N-terminus, the 246-residue chain is NLP effector protein 2 (246 aa).

The signal sequence occupies residues 1 to 19 (MKFVVFLCAIAAVVATIQG). The Conserved undecapeptide motif I signature appears at 113 to 123 (AIMYSWYFPKD). The Hepta-peptide GHRHDWE motif II motif lies at 130–136 (GHRHDWE).

This sequence belongs to the Necrosis inducing protein (NPP1) family.

The protein localises to the secreted. Functionally, secreted effector that contributes strongly to virulence during infection by P.capsici. Causes large necrotic areas in both host C.annuum and non-host N.benthamiana. The protein is NLP effector protein 2 of Phytophthora capsici.